The chain runs to 413 residues: Gamma-glutamyl phosphate reductase (413 aa).

The protein belongs to the gamma-glutamyl phosphate reductase family.

The protein localises to the cytoplasm. It carries out the reaction L-glutamate 5-semialdehyde + phosphate + NADP(+) = L-glutamyl 5-phosphate + NADPH + H(+). It participates in amino-acid biosynthesis; L-proline biosynthesis; L-glutamate 5-semialdehyde from L-glutamate: step 2/2. Catalyzes the NADPH-dependent reduction of L-glutamate 5-phosphate into L-glutamate 5-semialdehyde and phosphate. The product spontaneously undergoes cyclization to form 1-pyrroline-5-carboxylate. The sequence is that of Gamma-glutamyl phosphate reductase from Leuconostoc mesenteroides subsp. mesenteroides (strain ATCC 8293 / DSM 20343 / BCRC 11652 / CCM 1803 / JCM 6124 / NCDO 523 / NBRC 100496 / NCIMB 8023 / NCTC 12954 / NRRL B-1118 / 37Y).